A 408-amino-acid polypeptide reads, in one-letter code: Glutamate N-acetyltransferase (408 aa).

Residues T150, K176, T189, E271, N403, and T408 each coordinate substrate. T189 acts as the Nucleophile in catalysis.

It belongs to the ArgJ family. Heterotetramer of two alpha and two beta chains.

Its subcellular location is the cytoplasm. The enzyme catalyses N(2)-acetyl-L-ornithine + L-glutamate = N-acetyl-L-glutamate + L-ornithine. It functions in the pathway amino-acid biosynthesis; L-arginine biosynthesis; L-ornithine and N-acetyl-L-glutamate from L-glutamate and N(2)-acetyl-L-ornithine (cyclic): step 1/1. In terms of biological role, catalyzes the transfer of the acetyl group from N(2)-acetylornithine to glutamate, forming N-acetylglutamate and L-ornithine. The chain is Glutamate N-acetyltransferase from Methanococcus maripaludis (strain C6 / ATCC BAA-1332).